The primary structure comprises 313 residues: Pyrimidine-specific ribonucleoside hydrolase RihB (313 aa).

The Proton acceptor role is filled by Asp-11. Residues Asp-11, Asp-16, and Val-124 each contribute to the Ca(2+) site. 2 residues coordinate substrate: Gln-227 and His-239. Asp-240 contacts Ca(2+).

The protein belongs to the IUNH family. RihB subfamily. In terms of assembly, homotetramer. It depends on Ca(2+) as a cofactor.

The catalysed reaction is a pyrimidine ribonucleoside + H2O = a pyrimidine nucleobase + D-ribose. Functionally, hydrolyzes cytidine or uridine to ribose and cytosine or uracil, respectively. Has a clear preference for cytidine over uridine. Strictly specific for ribonucleosides. The polypeptide is Pyrimidine-specific ribonucleoside hydrolase RihB (Shigella sonnei (strain Ss046)).